The following is an 874-amino-acid chain: Cap-specific mRNA (nucleoside-2'-O-)-methyltransferase 1A (874 aa).

The segment covering 1 to 10 (MSERGDDDRT) has biased composition (basic and acidic residues). The segment at 1–64 (MSERGDDDRT…APPTKQKTKA (64 aa)) is disordered. The G-patch domain occupies 60–106 (QKTKAEEMMERMGYKAGEGLGKNKQGIQEPVALSTQRGKTGLGHEGA). A RrmJ-type SAM-dependent 2'-O-MTase domain is found at 211-440 (FFQNRAAMKT…ERYITCKGLR (230 aa)). S-adenosyl-L-methionine-binding residues include Gly273 and Asp354. The active-site Proton acceptor is the Lys394. The segment at 535 to 555 (PNKQRPRGGDRGSRNGNQERL) is disordered.

The catalysed reaction is a 5'-end (N(7)-methyl 5'-triphosphoguanosine)-ribonucleoside in mRNA + S-adenosyl-L-methionine = a 5'-end (N(7)-methyl 5'-triphosphoguanosine)-(2'-O-methyl-ribonucleoside) in mRNA + S-adenosyl-L-homocysteine + H(+). In terms of biological role, S-adenosyl-L-methionine-dependent methyltransferase that mediates mRNA cap1 2'-O-ribose methylation to the 5'-cap structure of mRNAs. Methylates the ribose of the first nucleotide of a m(7)GpppG-capped mRNA to produce m(7)GpppNmp (cap1). Cap1 modification is linked to higher levels of translation. The sequence is that of Cap-specific mRNA (nucleoside-2'-O-)-methyltransferase 1A from Caenorhabditis briggsae.